We begin with the raw amino-acid sequence, 252 residues long: Imidazole glycerol phosphate synthase subunit HisF (252 aa).

Residues Asp11 and Asp130 contribute to the active site.

It belongs to the HisA/HisF family. As to quaternary structure, heterodimer of HisH and HisF.

It localises to the cytoplasm. The catalysed reaction is 5-[(5-phospho-1-deoxy-D-ribulos-1-ylimino)methylamino]-1-(5-phospho-beta-D-ribosyl)imidazole-4-carboxamide + L-glutamine = D-erythro-1-(imidazol-4-yl)glycerol 3-phosphate + 5-amino-1-(5-phospho-beta-D-ribosyl)imidazole-4-carboxamide + L-glutamate + H(+). It functions in the pathway amino-acid biosynthesis; L-histidine biosynthesis; L-histidine from 5-phospho-alpha-D-ribose 1-diphosphate: step 5/9. IGPS catalyzes the conversion of PRFAR and glutamine to IGP, AICAR and glutamate. The HisF subunit catalyzes the cyclization activity that produces IGP and AICAR from PRFAR using the ammonia provided by the HisH subunit. The polypeptide is Imidazole glycerol phosphate synthase subunit HisF (Polynucleobacter asymbioticus (strain DSM 18221 / CIP 109841 / QLW-P1DMWA-1) (Polynucleobacter necessarius subsp. asymbioticus)).